A 235-amino-acid polypeptide reads, in one-letter code: Aspartate/glutamate leucyltransferase (235 aa).

It belongs to the R-transferase family. Bpt subfamily.

It localises to the cytoplasm. The enzyme catalyses N-terminal L-glutamyl-[protein] + L-leucyl-tRNA(Leu) = N-terminal L-leucyl-L-glutamyl-[protein] + tRNA(Leu) + H(+). It catalyses the reaction N-terminal L-aspartyl-[protein] + L-leucyl-tRNA(Leu) = N-terminal L-leucyl-L-aspartyl-[protein] + tRNA(Leu) + H(+). Functions in the N-end rule pathway of protein degradation where it conjugates Leu from its aminoacyl-tRNA to the N-termini of proteins containing an N-terminal aspartate or glutamate. The polypeptide is Aspartate/glutamate leucyltransferase (Pseudomonas entomophila (strain L48)).